The chain runs to 118 residues: MNTYAFNRELRLLTPEHYQNVFQQAHRAGSPHFTIIARNNKLSHPRLGLAVPKKQIKTAVGRNRFKRLARESFRNNQHQLPNKDFVVIAKKSAQDLSNEELFKLFDKLWHRLSRPSRG.

This sequence belongs to the RnpA family. As to quaternary structure, consists of a catalytic RNA component (M1 or rnpB) and a protein subunit.

The catalysed reaction is Endonucleolytic cleavage of RNA, removing 5'-extranucleotides from tRNA precursor.. In terms of biological role, RNaseP catalyzes the removal of the 5'-leader sequence from pre-tRNA to produce the mature 5'-terminus. It can also cleave other RNA substrates such as 4.5S RNA. The protein component plays an auxiliary but essential role in vivo by binding to the 5'-leader sequence and broadening the substrate specificity of the ribozyme. This chain is Ribonuclease P protein component, found in Vibrio campbellii (strain ATCC BAA-1116).